We begin with the raw amino-acid sequence, 209 residues long: Large ribosomal subunit protein uL3 (209 aa).

A compositionally biased stretch (polar residues) spans 112-122 (GTTRGHGTQGN). A disordered region spans residues 112-146 (GTTRGHGTQGNIKRWGQSRGPETHGSRYHRIPGSM).

This sequence belongs to the universal ribosomal protein uL3 family. As to quaternary structure, part of the 50S ribosomal subunit. Forms a cluster with proteins L14 and L19.

In terms of biological role, one of the primary rRNA binding proteins, it binds directly near the 3'-end of the 23S rRNA, where it nucleates assembly of the 50S subunit. The chain is Large ribosomal subunit protein uL3 from Lactobacillus johnsonii (strain CNCM I-12250 / La1 / NCC 533).